A 713-amino-acid polypeptide reads, in one-letter code: Forkhead box protein P2 (713 aa).

A compositionally biased stretch (polar residues) spans 1-28 (MMQESATETISNSSMNQNGMSTLSSQLD). 2 disordered regions span residues 1–44 (MMQE…SSEV) and 283–337 (KHGG…TGAS). Residues 290 to 303 (TTNNSSSTTSSTTS) are compositionally biased toward low complexity. Residues 313 to 322 (SIVNGQSSVL) are compositionally biased toward polar residues. Residues 324–335 (ARRDSSSHEETG) show a composition bias toward basic and acidic residues. The C2H2-type zinc finger occupies 344 to 369 (GVCKWPGCESICEDFGQFLKHLNNEH). Residues 386-407 (VQQLEIQLSKERERLQAMMTHL) form a leucine-zipper region. The tract at residues 420–424 (PLNLV) is CTBP1-binding. A compositionally biased stretch (low complexity) spans 436 to 457 (TSPQSLPQTPTTPTAPVTPITQ). Residues 436–463 (TSPQSLPQTPTTPTAPVTPITQGPSVIT) form a disordered region. Residues 502 to 592 (RPPFTYATLI…SQKITGSPTL (91 aa)) constitute a DNA-binding region (fork-head). 2 disordered regions span residues 647–666 (LDHI…QPHI) and 676–713 (VIAE…EDLE). Over residues 697 to 713 (LEDDREIEEEPLSEDLE) the composition is skewed to acidic residues.

Forms homodimers and heterodimers with FOXP1 and FOXP4. Dimerization is required for DNA-binding. Interacts with CTBP1. Interacts with FOXP1. Interacts with TBR1. Interacts with ZMYM2.

The protein resides in the nucleus. Functionally, transcriptional repressor that may play a role in the specification and differentiation of lung epithelium. May also play a role in developing neural, gastrointestinal and cardiovascular tissues. Can act with CTBP1 to synergistically repress transcription but CTPBP1 is not essential. Plays a role in synapse formation by regulating SRPX2 levels. This Gorilla gorilla gorilla (Western lowland gorilla) protein is Forkhead box protein P2 (FOXP2).